Here is a 366-residue protein sequence, read N- to C-terminus: Dehydrogenase aclE (366 aa).

The signal sequence occupies residues 1–19 (MSKRIRLGIVGLSADPSHC). Asn330 is a glycosylation site (N-linked (GlcNAc...) asparagine).

It belongs to the Gfo/Idh/MocA family.

The protein operates within mycotoxin biosynthesis. In terms of biological role, dehydrogenase; part of the gene cluster that mediates the biosynthesis of aspirochlorine (or antibiotic A30641), an unusual halogenated spiro compound with distinctive antifungal properties due to selective inhibition of protein biosynthesis, and which is also active against bacteria, viruses, and murine tumor cells. The non-ribosomal peptide synthetase (NRPS) aclP is responsible the formation of the diketopiperazine (DKP) core from the condensation of 2 phenylalanine residues. One Phe residue is tailored into chlorotyrosine by hydroxylation and chlorination, whereas the second Phe undergoes an unprecedented C-C bond cleavage to be converted into glycine. After formation of the DKP, sulfur is incorporated into the DKP by conjugation with glutathione by aclG, followed by its stepwise degradation to the thiol by aclI, aclJ and aclK, and the dithiol oxidation by aclT. In addition, oxygenases (aclB, aclC, aclL and aclO) and O-methyltransferases (aclM and aclU) act as tailoring enzymes to produce the intermediate dechloroaspirochlorine. Ultimately, chlorination of dechloroaspirochlorine by the halogenase aclH is the last step in the aspirochlorine pathway. In Aspergillus oryzae (strain ATCC 42149 / RIB 40) (Yellow koji mold), this protein is Dehydrogenase aclE.